A 232-amino-acid chain; its full sequence is Zinc-finger homeodomain protein 5 (232 aa).

Over residues 1-11 the composition is skewed to acidic residues; that stretch reads MELSEHEEDAG. Residues 1–25 form a disordered region; it reads MELSEHEEDAGDVGGGCSSPPTPPH. The ZF-HD dimerization-type; degenerate zinc-finger motif lies at 40 to 86; it reads YHECLRNHAAASGGHVVDGCGEFMPASTEEPLACAACGCHRSFHRRD. The interval 126 to 170 is disordered; that stretch reads GLPFPGYGTPSGGTGTTTASSSDERLRPSPVQPRRRSRTTFTREQ. The homeobox DNA-binding region spans 159-222; the sequence is RRRSRTTFTR…NNKHSFKQKQ (64 aa).

Homo- and heterodimer with other ZFHD proteins.

Its subcellular location is the nucleus. Its function is as follows. Putative transcription factor. In Oryza sativa subsp. japonica (Rice), this protein is Zinc-finger homeodomain protein 5 (ZHD5).